The following is a 201-amino-acid chain: 3-isopropylmalate dehydratase small subunit (201 aa).

This sequence belongs to the LeuD family. LeuD type 1 subfamily. As to quaternary structure, heterodimer of LeuC and LeuD.

It carries out the reaction (2R,3S)-3-isopropylmalate = (2S)-2-isopropylmalate. The protein operates within amino-acid biosynthesis; L-leucine biosynthesis; L-leucine from 3-methyl-2-oxobutanoate: step 2/4. Catalyzes the isomerization between 2-isopropylmalate and 3-isopropylmalate, via the formation of 2-isopropylmaleate. The chain is 3-isopropylmalate dehydratase small subunit from Thermus thermophilus (strain ATCC BAA-163 / DSM 7039 / HB27).